The following is a 606-amino-acid chain: Alpha-1,2-mannosyltransferase MNN23 (606 aa).

The Cytoplasmic segment spans residues Met1–Lys14. The chain crosses the membrane as a helical span at residues Ala15–Ile35. Topologically, residues Thr36–Asn606 are extracellular. A disordered region spans residues Asp59–Asn86. Residues Glu62–Gly78 are compositionally biased toward basic and acidic residues.

The protein belongs to the MNN1/MNT family.

Its subcellular location is the golgi apparatus membrane. Its pathway is protein modification; protein glycosylation. Its function is as follows. Alpha-1,2-mannosyltransferase required for cell wall integrity. Responsible for addition of the first alpha-1,2-linked mannose to form the branches on the mannan backbone of oligosaccharides. Addition of alpha-1,2-mannose is required for stabilization of the alpha-1,6-mannose backbone and hence regulates mannan fibril length; and is important for both immune recognition and virulence. In Candida albicans (strain SC5314 / ATCC MYA-2876) (Yeast), this protein is Alpha-1,2-mannosyltransferase MNN23 (MNN23).